A 200-amino-acid chain; its full sequence is Nitrile hydratase subunit alpha (200 aa).

The Fe(3+) site is built by cysteine 105, cysteine 108, serine 109, and cysteine 110. At cysteine 108 the chain carries Cysteine sulfinic acid (-SO2H). A Cysteine sulfenic acid (-SOH) modification is found at cysteine 110.

The protein belongs to the nitrile hydratase subunit alpha family. As to quaternary structure, heterodimer of an alpha and a beta chain. The cofactor is Fe(3+). In terms of processing, oxidation on Cys-108 is essential for the activity. Post-translationally, oxidation on Cys-110 stabilizes the Fe-NO ligand coordinated in the inactive form.

The catalysed reaction is an aliphatic primary amide = an aliphatic nitrile + H2O. With respect to regulation, inactivated by oxidation of Cys-110 to a sulfenic acid. NHase catalyzes the hydration of various nitrile compounds to the corresponding amides. Industrial production of acrylamide is now being developed using some of the enzymes of this class. The sequence is that of Nitrile hydratase subunit alpha (nthA) from Pseudomonas chlororaphis (Pseudomonas aureofaciens).